A 501-amino-acid chain; its full sequence is ATP synthase subunit alpha (501 aa).

169-176 lines the ATP pocket; the sequence is GDRQTGKT.

Belongs to the ATPase alpha/beta chains family. As to quaternary structure, F-type ATPases have 2 components, CF(1) - the catalytic core - and CF(0) - the membrane proton channel. CF(1) has five subunits: alpha(3), beta(3), gamma(1), delta(1), epsilon(1). CF(0) has three main subunits: a(1), b(2) and c(9-12). The alpha and beta chains form an alternating ring which encloses part of the gamma chain. CF(1) is attached to CF(0) by a central stalk formed by the gamma and epsilon chains, while a peripheral stalk is formed by the delta and b chains.

The protein localises to the cell membrane. The enzyme catalyses ATP + H2O + 4 H(+)(in) = ADP + phosphate + 5 H(+)(out). Produces ATP from ADP in the presence of a proton gradient across the membrane. The alpha chain is a regulatory subunit. The protein is ATP synthase subunit alpha of Streptococcus pneumoniae serotype 4 (strain ATCC BAA-334 / TIGR4).